A 469-amino-acid polypeptide reads, in one-letter code: Glutamate--tRNA ligase (469 aa).

The 'HIGH' region motif lies at 9-19 (PSPTGFLHVGG). Positions 98, 100, 125, and 127 each coordinate Zn(2+). The short motif at 236–240 (KLSKR) is the 'KMSKS' region element. Lysine 239 is a binding site for ATP.

This sequence belongs to the class-I aminoacyl-tRNA synthetase family. Glutamate--tRNA ligase type 1 subfamily. Monomer. Requires Zn(2+) as cofactor.

The protein resides in the cytoplasm. It catalyses the reaction tRNA(Glu) + L-glutamate + ATP = L-glutamyl-tRNA(Glu) + AMP + diphosphate. Catalyzes the attachment of glutamate to tRNA(Glu) in a two-step reaction: glutamate is first activated by ATP to form Glu-AMP and then transferred to the acceptor end of tRNA(Glu). The polypeptide is Glutamate--tRNA ligase (Shewanella sp. (strain MR-4)).